Reading from the N-terminus, the 163-residue chain is CASP-like protein 1C2 (163 aa).

Over 1-6 (MAKSNK) the chain is Cytoplasmic. A helical transmembrane segment spans residues 7-27 (IFTNTLRLLALAATVVAIVFM). The Extracellular segment spans residues 28–52 (VTSHDSAQVLNLTFTAKYSNTPAFK). Asn38 is a glycosylation site (N-linked (GlcNAc...) asparagine). A helical membrane pass occupies residues 53–73 (FLVIGEAIAGGYTVISILLSF). Residues 74–79 (KGLFWR) lie on the Cytoplasmic side of the membrane. A helical membrane pass occupies residues 80–100 (LIVILDMVTTVLLTSSISAAL). The Extracellular portion of the chain corresponds to 101–128 (AIAQVGKKGNTHAGWLPICGQVPDFCDY). A helical membrane pass occupies residues 129–149 (VTIALIAGFAAAIIYFVLLLC). The Cytoplasmic portion of the chain corresponds to 150–163 (SLYVVLSPIFVATP).

It belongs to the Casparian strip membrane proteins (CASP) family. In terms of assembly, homodimer and heterodimers.

The protein resides in the cell membrane. The polypeptide is CASP-like protein 1C2 (Populus trichocarpa (Western balsam poplar)).